The sequence spans 342 residues: Heat-inducible transcription repressor HrcA (342 aa).

The protein belongs to the HrcA family.

In terms of biological role, negative regulator of class I heat shock genes (grpE-dnaK-dnaJ and groELS operons). Prevents heat-shock induction of these operons. This Dechloromonas aromatica (strain RCB) protein is Heat-inducible transcription repressor HrcA.